Here is a 312-residue protein sequence, read N- to C-terminus: Homoserine O-succinyltransferase (312 aa).

The active-site Acyl-thioester intermediate is Cys142. Positions 163 and 192 each coordinate substrate. His235 serves as the catalytic Proton acceptor. The active site involves Glu237. Arg249 is a substrate binding site.

Belongs to the MetA family.

Its subcellular location is the cytoplasm. It carries out the reaction L-homoserine + succinyl-CoA = O-succinyl-L-homoserine + CoA. The protein operates within amino-acid biosynthesis; L-methionine biosynthesis via de novo pathway; O-succinyl-L-homoserine from L-homoserine: step 1/1. Transfers a succinyl group from succinyl-CoA to L-homoserine, forming succinyl-L-homoserine. This chain is Homoserine O-succinyltransferase, found in Alteromonas mediterranea (strain DSM 17117 / CIP 110805 / LMG 28347 / Deep ecotype).